We begin with the raw amino-acid sequence, 798 residues long: Serine/threonine-protein kinase SIK2 (798 aa).

A Protein kinase domain is found at 26–277 (YDIERTLGKG…ISQIKQHKWM (252 aa)). ATP is bound by residues 32–40 (LGKGNFAVV) and lysine 55. Catalysis depends on aspartate 148, which acts as the Proton acceptor. Position 181 is a phosphothreonine (threonine 181). A Phosphoserine modification is found at serine 185. Residues 302–342 (DYNEQVLGIMQTLGIDRQRTVESLQNSSYNHFAAIYYLLLE) form the UBA domain. Polar residues predominate over residues 351-361 (QLSSRPATGRQ). The disordered stretch occupies residues 351-382 (QLSSRPATGRQQRPRSSEISNAEMPQDSLTSE). Serine 575 carries the phosphoserine modification. The tract at residues 672–691 (ACPQTSQTSATNGLPPSDSA) is disordered. The segment covering 673–685 (CPQTSQTSATNGL) has biased composition (polar residues).

The protein belongs to the protein kinase superfamily. CAMK Ser/Thr protein kinase family. SNF1 subfamily. The cofactor is Mg(2+). Phosphorylated at Thr-181 by STK11/LKB1 in complex with STE20-related adapter-alpha (STRADA) pseudo kinase and CAB39. As to expression, ubiquitously expressed in embryonic tissue.

The protein localises to the cytoplasm. The enzyme catalyses L-seryl-[protein] + ATP = O-phospho-L-seryl-[protein] + ADP + H(+). It catalyses the reaction L-threonyl-[protein] + ATP = O-phospho-L-threonyl-[protein] + ADP + H(+). With respect to regulation, activated by phosphorylation on Thr-181. Functionally, phosphorylates IRS1 in insulin-stimulated adipocytes, potentially modulating the efficiency of insulin signal transduction. Inhibits CREB activity by phosphorylating and repressing the CREB-specific coactivators, CRTC1-3. This Gallus gallus (Chicken) protein is Serine/threonine-protein kinase SIK2 (SIK2).